The following is a 518-amino-acid chain: ESX-3 secretion system ATPase EccB3 (518 aa).

Residues 1–26 (MTGPVNPDDRRSFSSRTPVNENPDGV) are disordered. Residues 71–91 (VLTGALILVTGLVGCFIFSLF) form a helical membrane-spanning segment.

This sequence belongs to the EccB family. In terms of assembly, part of the ESX-3 / type VII secretion system (T7SS), which is composed of cytosolic and membrane components. The ESX-3 membrane complex is composed of EccB3, EccC3, EccD3 and EccE3.

The protein localises to the cell inner membrane. Its function is as follows. An ATPase. Part of the ESX-3 specialized secretion system, which is required for siderophore-mediated iron acquisition and for the secretion of EsxH and EsxG. This chain is ESX-3 secretion system ATPase EccB3, found in Mycolicibacterium smegmatis (strain ATCC 700084 / mc(2)155) (Mycobacterium smegmatis).